Reading from the N-terminus, the 335-residue chain is Dolichyl-diphosphooligosaccharide--protein glycosyltransferase subunit MAGT1 (335 aa).

Residues 1 to 29 form the signal peptide; that stretch reads MASPRWLWCVCATAAVTLLLVSKVPSASA. Over 30 to 184 the chain is Extracellular; it reads QRKKEKVLVE…DVNIRVIRPP (155 aa). The Thioredoxin domain maps to 47–175; sequence WTNQRPVIRM…IARWIADRTD (129 aa). N71 carries an N-linked (GlcNAc...) asparagine glycan. A disulfide bridge connects residues C87 and C90. Residues 185 to 205 traverse the membrane as a helical segment; it reads NYAGPLMLGLLLAVIGGLVYL. The Cytoplasmic segment spans residues 206 to 209; that stretch reads RRSN. The helical transmembrane segment at 210–230 threads the bilayer; the sequence is MEFLFNKTGWAFAALCFVLAM. The Extracellular portion of the chain corresponds to 231–270; that stretch reads TSGQMWNHIRGPPYAHKNPHTGHVNYIHGSSQAQFVAETH. A helical transmembrane segment spans residues 271–291; the sequence is IVLLFNGGVTLGMVLLCEAAA. The Cytoplasmic segment spans residues 292 to 300; it reads SDMDIGKRR. A helical transmembrane segment spans residues 301–321; that stretch reads MMCIAGIGLVVLFFSWMLSIF. Residues 322 to 335 are Extracellular-facing; sequence RSKYHGYPYSFLMS.

Belongs to the OST3/OST6 family. Accessory component of the STT3B-containing form of the oligosaccharyltransferase (OST) complex. OST exists in two different complex forms which contain common core subunits RPN1, RPN2, OST48, OST4, DAD1 and TMEM258, either STT3A or STT3B as catalytic subunits, and form-specific accessory subunits. OST can form stable complexes with the Sec61 complex or with both the Sec61 and TRAP complexes. The association of TUSC3 or MAGT1 with the STT3B-containing complex seems to be mutually exclusvice.

It is found in the cell membrane. The protein resides in the endoplasmic reticulum. The protein localises to the endoplasmic reticulum membrane. It functions in the pathway protein modification; protein glycosylation. In terms of biological role, accessory component of the STT3B-containing form of the N-oligosaccharyl transferase (OST) complex which catalyzes the transfer of a high mannose oligosaccharide from a lipid-linked oligosaccharide donor to an asparagine residue within an Asn-X-Ser/Thr consensus motif in nascent polypeptide chains. Involved in N-glycosylation of STT3B-dependent substrates. Specifically required for the glycosylation of a subset of acceptor sites that are near cysteine residues; in this function seems to act redundantly with TUSC3. In its oxidized form proposed to form transient mixed disulfides with a glycoprotein substrate to facilitate access of STT3B to the unmodified acceptor site. Also has oxidoreductase-independent functions in the STT3B-containing OST complex possibly involving substrate recognition. Could indirectly play a role in Mg(2+) transport in epithelial cells. The protein is Dolichyl-diphosphooligosaccharide--protein glycosyltransferase subunit MAGT1 of Rattus norvegicus (Rat).